Here is a 544-residue protein sequence, read N- to C-terminus: Cytochrome P450 2U1 (544 aa).

Helical transmembrane passes span 30 to 50 (LDPSGGALLLCGLVALLGWSW), 113 to 133 (VYGSIFSFFIGHYLVVVLSDF), 261 to 281 (ICLNSQVLLVNICPWLYYLPF), and 342 to 362 (LFYIIGDLFIAGTDTTTNSLL). C490 is a heme binding site. A helical transmembrane segment spans residues 495–515 (LAKMELFLMFVSLMQSFAFAL).

The protein belongs to the cytochrome P450 family. The cofactor is heme. Widely expressed with stronger expression in thymus, heart and cerebellum.

The protein resides in the endoplasmic reticulum membrane. It localises to the microsome membrane. The protein localises to the mitochondrion inner membrane. It carries out the reaction an omega-methyl-long-chain fatty acid + reduced [NADPH--hemoprotein reductase] + O2 = an omega-hydroxy-long-chain fatty acid + oxidized [NADPH--hemoprotein reductase] + H2O + H(+). It catalyses the reaction (5Z,8Z,11Z,14Z)-eicosatetraenoate + reduced [NADPH--hemoprotein reductase] + O2 = 19-hydroxy-(5Z,8Z,11Z,14Z)-eicosatetraenoate + oxidized [NADPH--hemoprotein reductase] + H2O + H(+). The enzyme catalyses (5Z,8Z,11Z,14Z)-eicosatetraenoate + reduced [NADPH--hemoprotein reductase] + O2 = 20-hydroxy-(5Z,8Z,11Z,14Z)-eicosatetraenoate + oxidized [NADPH--hemoprotein reductase] + H2O + H(+). The catalysed reaction is N-[(5Z,8Z,11Z,14Z)-eicosatetraenoyl]-serotonin + reduced [NADPH--hemoprotein reductase] + O2 = 2-oxo-N-[(5Z,8Z,11Z,14Z)-eicosatetraenoyl]-serotonin + oxidized [NADPH--hemoprotein reductase] + H2O + H(+). Its pathway is lipid metabolism; arachidonate metabolism. Functionally, a cytochrome P450 monooxygenase involved in the metabolism of arachidonic acid and its conjugates. Mechanistically, uses molecular oxygen inserting one oxygen atom into a substrate, and reducing the second into a water molecule, with two electrons provided by NADPH via cytochrome P450 reductase (CPR; NADPH-ferrihemoprotein reductase). Acts as an omega and omega-1 hydroxylase for arachidonic acid and possibly for other long chain fatty acids. May modulate the arachidonic acid signaling pathway and play a role in other fatty acid signaling processes. May down-regulate the biological activities of N-arachidonoyl-serotonin, an endocannabinoid that has anti-nociceptive effects through inhibition of fatty acid amide hydrolase FAAH, TRPV1 receptor and T-type calcium channels. Catalyzes C-2 oxidation of the indole ring of N-arachidonoyl-serotonin forming a less active product 2-oxo-N-arachidonoyl-serotonin. The polypeptide is Cytochrome P450 2U1 (Homo sapiens (Human)).